Here is a 901-residue protein sequence, read N- to C-terminus: Protein translocase subunit SecA (901 aa).

ATP is bound by residues Gln87, 105-109 (GEGKT), and Asp512. Positions 859–901 (HQDDDSAAAAALAAQTGERKVGRNDPCPCGSGKKYKQCHGRLQ) are disordered. Zn(2+) contacts are provided by Cys885, Cys887, Cys896, and His897. Basic residues predominate over residues 891–901 (KKYKQCHGRLQ).

It belongs to the SecA family. In terms of assembly, monomer and homodimer. Part of the essential Sec protein translocation apparatus which comprises SecA, SecYEG and auxiliary proteins SecDF-YajC and YidC. Requires Zn(2+) as cofactor.

It localises to the cell inner membrane. Its subcellular location is the cytoplasm. It carries out the reaction ATP + H2O + cellular proteinSide 1 = ADP + phosphate + cellular proteinSide 2.. Its function is as follows. Part of the Sec protein translocase complex. Interacts with the SecYEG preprotein conducting channel. Has a central role in coupling the hydrolysis of ATP to the transfer of proteins into and across the cell membrane, serving both as a receptor for the preprotein-SecB complex and as an ATP-driven molecular motor driving the stepwise translocation of polypeptide chains across the membrane. In Escherichia coli O6:K15:H31 (strain 536 / UPEC), this protein is Protein translocase subunit SecA.